A 130-amino-acid chain; its full sequence is Large ribosomal subunit protein bL19 (130 aa).

This sequence belongs to the bacterial ribosomal protein bL19 family.

Functionally, this protein is located at the 30S-50S ribosomal subunit interface and may play a role in the structure and function of the aminoacyl-tRNA binding site. This chain is Large ribosomal subunit protein bL19, found in Burkholderia vietnamiensis (strain G4 / LMG 22486) (Burkholderia cepacia (strain R1808)).